Here is a 246-residue protein sequence, read N- to C-terminus: Proteasome subunit alpha type-6-B (246 aa).

The protein belongs to the peptidase T1A family. As to quaternary structure, component of the 20S core complex of the 26S proteasome. The 26S proteasome is composed of a core protease (CP), known as the 20S proteasome, capped at one or both ends by the 19S regulatory particle (RP/PA700). The 20S proteasome core is composed of 28 subunits that are arranged in four stacked rings, resulting in a barrel-shaped structure. The two end rings are each formed by seven alpha subunits, and the two central rings are each formed by seven beta subunits. The catalytic chamber with the active sites is on the inside of the barrel.

It is found in the cytoplasm. The protein localises to the nucleus. Its function is as follows. The proteasome is a multicatalytic proteinase complex which is characterized by its ability to cleave peptides with Arg, Phe, Tyr, Leu, and Glu adjacent to the leaving group at neutral or slightly basic pH. The proteasome has an ATP-dependent proteolytic activity. This Arabidopsis thaliana (Mouse-ear cress) protein is Proteasome subunit alpha type-6-B (PAA2).